Here is a 503-residue protein sequence, read N- to C-terminus: MSQLKLEEISSVIEEKIKNFELDCDMAEVGKVVSYADGVAKIYGLNGVMSYEVLEFETGDKGVAANLEEDSVGVIVFGFGNNIKEGTSVKRTKSLMKVPVGDAVVGRVLNALGEPIDGKGEIETNEFSLIEQKAPGIMDRKSVHEPLQTGIKAIDALVPIGRGQRELIIGDKQTGKTTVAIDTIINQKGQNVICIYVAIGQKESTVAQVVRKLEEYGAMEYSVVVNASASDSAAMQYLAPYAGVAMGEYFRDHARHALIIYDDLSKHAVAYREISLILRRPPGREAFPGDVFYIHSRLLERAAKVCDEKGAGSLTALPIVETQAGDVSAYIPTNIISITDGQIFLETDLFYSGIRPAINVGLSVSRVGGAAQIKATKQVSGTLRLDLAQYRELQAFTQFASDLDEASKKQLERGQRMVEVLKQAPYSPLPIEKQVVIIYAGAKGFLDSVSVKKVVDFEERLYPFLEAKYPQVLEEIHIKKALDKDLEAMLKKALEEFKLTYSE.

170–177 (GDKQTGKT) lines the ATP pocket.

This sequence belongs to the ATPase alpha/beta chains family. F-type ATPases have 2 components, CF(1) - the catalytic core - and CF(0) - the membrane proton channel. CF(1) has five subunits: alpha(3), beta(3), gamma(1), delta(1), epsilon(1). CF(0) has three main subunits: a(1), b(2) and c(9-12). The alpha and beta chains form an alternating ring which encloses part of the gamma chain. CF(1) is attached to CF(0) by a central stalk formed by the gamma and epsilon chains, while a peripheral stalk is formed by the delta and b chains.

It is found in the cell inner membrane. It carries out the reaction ATP + H2O + 4 H(+)(in) = ADP + phosphate + 5 H(+)(out). Produces ATP from ADP in the presence of a proton gradient across the membrane. The alpha chain is a regulatory subunit. The sequence is that of ATP synthase subunit alpha from Helicobacter acinonychis (strain Sheeba).